The primary structure comprises 313 residues: Acetaldehyde dehydrogenase (313 aa).

15-18 provides a ligand contact to NAD(+); sequence SGNI. The active-site Acyl-thioester intermediate is the C133. Residues 164-172 and N289 contribute to the NAD(+) site; that span reads SAGPGTRAN.

It belongs to the acetaldehyde dehydrogenase family.

The enzyme catalyses acetaldehyde + NAD(+) + CoA = acetyl-CoA + NADH + H(+). The chain is Acetaldehyde dehydrogenase from Rhizobium rhizogenes (strain K84 / ATCC BAA-868) (Agrobacterium radiobacter).